The chain runs to 200 residues: Probable GTP-binding protein EngB (200 aa).

The EngB-type G domain occupies 25–199; that stretch reads SGYEVAFAGR…ISVLDRWYEW (175 aa). GTP is bound by residues 33–40, 60–64, 78–81, 145–148, and 178–180; these read GRSNAGKS, GRTQL, DLPG, TKAD, and FSS. Mg(2+) is bound by residues Ser40 and Thr62.

Belongs to the TRAFAC class TrmE-Era-EngA-EngB-Septin-like GTPase superfamily. EngB GTPase family. Mg(2+) serves as cofactor.

In terms of biological role, necessary for normal cell division and for the maintenance of normal septation. The chain is Probable GTP-binding protein EngB from Legionella pneumophila (strain Paris).